A 287-amino-acid polypeptide reads, in one-letter code: uncharacterized protein (287 aa).

The N-terminal stretch at 1-31 is a signal peptide; the sequence is MLGSMALKLRKWIWASIPSLALILSSCSALV.

The protein belongs to the MG439/MG440 family.

This is an uncharacterized protein from Mycoplasma pneumoniae (strain ATCC 29342 / M129 / Subtype 1) (Mycoplasmoides pneumoniae).